Here is a 192-residue protein sequence, read N- to C-terminus: 3-isopropylmalate dehydratase small subunit (192 aa).

This sequence belongs to the LeuD family. LeuD type 1 subfamily. As to quaternary structure, heterodimer of LeuC and LeuD.

The enzyme catalyses (2R,3S)-3-isopropylmalate = (2S)-2-isopropylmalate. It participates in amino-acid biosynthesis; L-leucine biosynthesis; L-leucine from 3-methyl-2-oxobutanoate: step 2/4. Its function is as follows. Catalyzes the isomerization between 2-isopropylmalate and 3-isopropylmalate, via the formation of 2-isopropylmaleate. The chain is 3-isopropylmalate dehydratase small subunit from Zymomonas mobilis subsp. mobilis (strain ATCC 31821 / ZM4 / CP4).